Consider the following 94-residue polypeptide: C-X-C motif chemokine 11 (94 aa).

The signal sequence occupies residues 1–21 (MSVKGMAIALAVILCATVVQG). Position 27 is a citrulline; by PAD2 (Arg27). 2 cysteine pairs are disulfide-bonded: Cys30–Cys57 and Cys32–Cys74.

Interacts with TNFAIP6 (via Link domain). As to expression, high levels in peripheral blood leukocytes, pancreas and liver astrocytes. Moderate levels in thymus, spleen and lung. Low levels in placenta, prostate and small intestine. Also found in epidermal basal layer keratinocytes in skin disorders.

Its subcellular location is the secreted. Functionally, chemotactic for interleukin-activated T-cells but not unstimulated T-cells, neutrophils or monocytes. Induces calcium release in activated T-cells. Binds to CXCR3. May play an important role in CNS diseases which involve T-cell recruitment. May play a role in skin immune responses. The protein is C-X-C motif chemokine 11 (CXCL11) of Homo sapiens (Human).